The primary structure comprises 843 residues: MVAEESGPGAQNSPYQLRRKTLLPKRTACPTKNSMEGASTSTTENFGHRAKRARVSGKSQDLSAAPAEQYLQEKLPDEVVLKIFSYLLEQDLCRAACVCKRFSELANDPILWKRLYMEVFEYTRPMMHPEPGKFYQINPEEYEHPNPWKESFQQLYKGAHVKPGFAEHFYSNPARYKGRENMLYYDTIEDALGGVQEAHFDGLIFVHSGIYTDEWIYIESPITMIGAAPGKVADKVIIENTRDSTFVFMEGSEDAYVGYMTIRFNPDDKSAQHHNAHHCLEITVNCSPIIDHCIIRSTCTVGSAVCVSGQGACPTIKHCNISDCENVGLYITDHAQGIYEDNEISNNALAGIWVKNHGNPIIRRNHIHHGRDVGVFTFDHGMGYFESCNIHRNRIAGFEVKAYANPTVVRCEIHHGQTGGIYVHEKGRGQFIENKIYANNFAGVWITSNSDPTIRGNSIFNGNQGGVYIFGDGRGLIEGNDIYGNALAGIQIRTNSCPIVRHNKIHDGQHGGIYVHEKGQGVIEENEVYSNTLAGVWVTTGSTPVLRRNRIHSGKQVGVYFYDNGHGVLEDNDIYNHMYSGVQIRTGSNPKIRRNKIWGGQNGGILVYNSGLGCIEDNEIFDNAMAGVWIKTDSNPTLRRNKIHDGRDGGICIFNGGRGLLEENDIFRNAQAGVLISTNSHPVLRKNRIFDGFAAGIEITNHATATLEGNQIFNNRFGGLFLASGVNVTMKDNKIMNNQDAIEKAVSRGQCLYKISSYTSYPMHDFYRCHTCNTTDRNAICVNCIKKCHQGHDVEFIRHDRFFCDCGAGTLSNPCTLAGEPTHDTDTLYDSAPPIESNTLQHN.

The disordered stretch occupies residues 1-63 (MVAEESGPGA…RVSGKSQDLS (63 aa)). Residues 30–45 (PTKNSMEGASTSTTEN) show a composition bias toward polar residues. One can recognise an F-box domain in the interval 69 to 115 (QYLQEKLPDEVVLKIFSYLLEQDLCRAACVCKRFSELANDPILWKRL). PbH1 repeat units lie at residues 311-333 (GACP…YITD), 334-356 (HAQG…WVKN), 357-379 (HGNP…FTFD), 380-402 (HGMG…EVKA), 403-425 (YANP…YVHE), 426-448 (KGRG…WITS), 449-471 (NSDP…YIFG), 472-494 (DGRG…QIRT), 495-517 (NSCP…YVHE), 518-540 (KGQG…WVTT), 541-563 (GSTP…YFYD), 564-586 (NGHG…QIRT), 587-609 (GSNP…LVYN), 610-632 (SGLG…WIKT), 633-655 (DSNP…CIFN), 656-678 (GGRG…LIST), 679-701 (NSHP…EITN), 702-724 (HATA…FLAS), and 725-746 (GVNV…EKAV). Residues 749–820 (GQCLYKISSY…LSNPCTLAGE (72 aa)) form a UBR-type zinc finger.

Component of the SCF(FBXO11) complex consisting of CUL1, RBX1, SKP1 and FBXO11. Interacts with CIITA.

Its subcellular location is the nucleus. It is found in the chromosome. It participates in protein modification; protein ubiquitination. In terms of biological role, substrate recognition component of a SCF (SKP1-CUL1-F-box protein) E3 ubiquitin-protein ligase complex which mediates the ubiquitination and subsequent proteasomal degradation of target proteins, such as DTL/CDT2, BCL6, SNAI1 and PRDM1/BLIMP1. The SCF(FBXO11) complex mediates ubiquitination and degradation of BCL6, thereby playing a role in the germinal center B-cells terminal differentiation toward memory B-cells and plasma cells. The SCF(FBXO11) complex also mediates ubiquitination and degradation of DTL, an important step for the regulation of TGF-beta signaling, cell migration and the timing of the cell-cycle progression and exit. The SCF(FBXO11) complex also catalyzes ubiquitination and degradation of GSK3B-phosphorylated SNAI1. Binds to and neddylates phosphorylated p53/TP53, inhibiting its transcriptional activity. Plays a role in the regulatiom of erythropoiesis but not myelopoiesis or megakaryopoiesis. Mechanistically, activates erythroid genes by mediating the degradation of BAHD1, a heterochromatin-associated protein that recruits corepressors to H3K27me3 marks. Participates in macrophage cell death and inflammation in response to bacterial toxins by regulating the expression of complement 5a receptor 1/C5AR1 and IL-1beta. Acts as a critical regulator to determine the level of MHC-II by mediating the recognition of degron at the P/S/T domain of CIITA leading to its ubiquitination and subsequent degradation via the proteasome. Participates in the antiviral repsonse by initiating the activation of TBK1-IRF3-IFN-I axis. Mediates the 'Lys-63'-linked ubiquitination of TRAF3 to strengthen the interaction between TRAF3 and TBK1. This is F-box only protein 11 (Fbxo11) from Rattus norvegicus (Rat).